The primary structure comprises 247 residues: Cell division protein ZapD (247 aa).

The protein belongs to the ZapD family. As to quaternary structure, interacts with FtsZ.

The protein localises to the cytoplasm. Cell division factor that enhances FtsZ-ring assembly. Directly interacts with FtsZ and promotes bundling of FtsZ protofilaments, with a reduction in FtsZ GTPase activity. The chain is Cell division protein ZapD from Escherichia coli O139:H28 (strain E24377A / ETEC).